The following is a 291-amino-acid chain: MAVYAVGDLQGCLEPLQCLLEHVHFNPEQDRLWLVGDLVNRGPQSLETLRYLYSLRESLVCVLGNHDLHLLAVARKKELLKKGDTLLEILEAPDRDDLLGWVRRQKLMHYDAQRNVAMVHAGIAPQWTLKKALKHAAEVEHALQDEQLYGAFLDGMYGNEPTRWDNDLQGVTRLRVITNYFTRMRFCTSDGKLDLKSKEGVGTAIPGYAPWFSHQSRKTRDVKIIFGHWAALEGRCDEPDVFALDSGCVWGGSMTLLNVDTLERHQCNCDAMGNAADGLVTRVQPGATPLP.

It belongs to the Ap4A hydrolase family.

It carries out the reaction P(1),P(4)-bis(5'-adenosyl) tetraphosphate + H2O = 2 ADP + 2 H(+). In terms of biological role, hydrolyzes diadenosine 5',5'''-P1,P4-tetraphosphate to yield ADP. The protein is Bis(5'-nucleosyl)-tetraphosphatase, symmetrical of Pseudomonas syringae pv. syringae (strain B728a).